The following is a 678-amino-acid chain: Glycine--tRNA ligase beta subunit (678 aa).

It belongs to the class-II aminoacyl-tRNA synthetase family. As to quaternary structure, tetramer of two alpha and two beta subunits.

It localises to the cytoplasm. The catalysed reaction is tRNA(Gly) + glycine + ATP = glycyl-tRNA(Gly) + AMP + diphosphate. The polypeptide is Glycine--tRNA ligase beta subunit (Streptococcus pneumoniae (strain 70585)).